The following is a 341-amino-acid chain: Anthranilate phosphoribosyltransferase (341 aa).

Residues G81, 84–85, S89, 91–94, 109–117, and S121 each bind 5-phospho-alpha-D-ribose 1-diphosphate; these read GD, NIST, and KHGNRSASS. Residue G81 participates in anthranilate binding. S93 serves as a coordination point for Mg(2+). N112 is an anthranilate binding site. R167 lines the anthranilate pocket. Mg(2+)-binding residues include D225 and E226.

The protein belongs to the anthranilate phosphoribosyltransferase family. Homodimer. The cofactor is Mg(2+).

The enzyme catalyses N-(5-phospho-beta-D-ribosyl)anthranilate + diphosphate = 5-phospho-alpha-D-ribose 1-diphosphate + anthranilate. Its pathway is amino-acid biosynthesis; L-tryptophan biosynthesis; L-tryptophan from chorismate: step 2/5. Its function is as follows. Catalyzes the transfer of the phosphoribosyl group of 5-phosphorylribose-1-pyrophosphate (PRPP) to anthranilate to yield N-(5'-phosphoribosyl)-anthranilate (PRA). This Nocardioides sp. (strain ATCC BAA-499 / JS614) protein is Anthranilate phosphoribosyltransferase.